The following is a 501-amino-acid chain: MTQILETVDKSRLTVNPLLKNKSELGQFFTPSSISIFMACLFSEDKLNNAKVLDAGAGIGSLTSAFLARLISENIGKADLHLLEIDEMLEPYLSETLALFKDYIEINSQIIIDDFIEWAAYSLLDEESLLAKDKQRFTHAILNPPYKKIKSNSKHRKLLRKAGIETVNLYSAFVALTVDLMSDGGEIVFIIPRSFCNGPYFRHFRQHLLNKTSIKHMHLFESRDKAFKDDEVLQENVISKLEKGTVQEDVKISISTDDSFSVIRSYRYPFEKIVQPNDIEKFIHINTTNEETLIEKHPNVCYSLEELNIEVSTGPVVDFRVKENLREMPGEGTVPLFYPNHFVGTSLEYPKMMKKPNAIIRNEKVEKWLYPNGHYVVVKRFSSKEEKRRIVAGVLTPESVNDPVVGFENGLNVLHYNKSGISKEVAYGLYAYLNSTPVDKYFRIFNGHTQVNATDLRTMKFPSRDILISLGKWVIENIENVGQVEIDSKLEELLLNDRGNA.

The protein belongs to the N(4)/N(6)-methyltransferase family.

The catalysed reaction is a 2'-deoxyadenosine in DNA + S-adenosyl-L-methionine = an N(6)-methyl-2'-deoxyadenosine in DNA + S-adenosyl-L-homocysteine + H(+). A beta subtype methylase that recognizes the double-stranded sequence 5'-CTGCAG-3', methylates A-5 on both strands, and protects the DNA from cleavage by the BsuBI endonuclease. This chain is Type II methyltransferase M.BsuBI (hsdBM), found in Bacillus subtilis.